We begin with the raw amino-acid sequence, 157 residues long: MERFEITKTPINTENIIKKVEKREAGAITTFIGTVREWTNGKRTVRLEYEAYEPMAVQMLAQIGAEIEEKWEGASAAITHRIGVLDIGEAAVVIAVSSPHRKAAYEANEYAIERIKQIVPIWKKEIWEDGEQWIGDQLETTAYPNGKPDLSEGEQHD.

Substrate contacts are provided by residues 34–36, Thr-44, 100–101, Lys-116, and 123–125; these read TVR, HR, and KKE.

It belongs to the MoaE family. As to quaternary structure, heterotetramer of 2 MoaD subunits and 2 MoaE subunits. Also stable as homodimer. The enzyme changes between these two forms during catalysis.

It catalyses the reaction 2 [molybdopterin-synthase sulfur-carrier protein]-C-terminal-Gly-aminoethanethioate + cyclic pyranopterin phosphate + H2O = molybdopterin + 2 [molybdopterin-synthase sulfur-carrier protein]-C-terminal Gly-Gly + 2 H(+). The protein operates within cofactor biosynthesis; molybdopterin biosynthesis. In terms of biological role, converts molybdopterin precursor Z into molybdopterin. This requires the incorporation of two sulfur atoms into precursor Z to generate a dithiolene group. The sulfur is provided by MoaD. This Bacillus subtilis (strain 168) protein is Molybdopterin synthase catalytic subunit (moaE).